The primary structure comprises 251 residues: MKLTKLLSALLVIGLVLGGCKSKKDSNDIVAPIATLYNEGIILLDKKKYKKAAEEFGKIFYQHPGNEMTPQAELMQAYSLFLAAQYEEAVDILNMFINLHPANIDIAYAYYLKALSYYMLISDVNHDQSRTFLSKDSFEDVITKFPNTKYAIDSSLKIDLVNDHLAGKEMMIGRFYLKKKNPMAAINRFEEVIDNYQTTYHSVEALYRLVESYMMLGLHDEAKKYTSVLGYNYPNSKWYSYAYRLVKNYQN.

Positions 1–19 (MKLTKLLSALLVIGLVLGG) are cleaved as a signal peptide. Cys20 is lipidated: N-palmitoyl cysteine. Cys20 is lipidated: S-diacylglycerol cysteine. 3 TPR repeats span residues 33 to 66 (IATL…HPGN), 70 to 103 (PQAE…HPAN), and 166 to 199 (AGKE…YQTT).

It belongs to the BamD family. In terms of assembly, part of the Bam complex.

It localises to the cell outer membrane. In terms of biological role, part of the outer membrane protein assembly complex, which is involved in assembly and insertion of beta-barrel proteins into the outer membrane. This chain is Outer membrane protein assembly factor BamD, found in Rickettsia prowazekii (strain Madrid E).